Reading from the N-terminus, the 715-residue chain is Gelsolin, cytoplasmic (715 aa).

The segment at 1–124 (MTTELEIQKA…YLIGGVASGF (124 aa)) is actin-severing. The stretch at 24–75 (FELVPVPKTNHGKFYTGDSYIILKTTALESGRGFEWNLHYWQGKESSQDERG) is one Gelsolin-like 1 repeat. Residues 72–75 (DERG) form an actin-actin interfilament contact point region. 136–145 (KVLTRVKGKR) provides a ligand contact to a 1,2-diacyl-sn-glycero-3-phospho-(1D-myo-inositol-4,5-bisphosphate). 3 Gelsolin-like repeats span residues 147-187 (VRAT…FEKN), 260-306 (LKIT…TERA), and 405-451 (LRKE…NERT). The interval 384–715 (AAESKMIDDG…FLGWDKTLWD (332 aa)) is actin-binding, Ca-sensitive. Ca(2+) is bound by residues Gly-421, Asp-422, Glu-449, Thr-499, Asn-539, Asp-540, Glu-562, Asp-642, and Glu-665. Gelsolin-like repeat units lie at residues 524–564 (CRAV…SEIQ) and 625–667 (FIAE…EEKM).

The protein belongs to the villin/gelsolin family. Predominantly in the body wall muscle, but expression is not restricted to muscle cells.

It is found in the cytoplasm. The protein resides in the cytoskeleton. In terms of biological role, calcium-regulated, actin-modulating protein that binds to the plus (or barbed) ends of actin monomers or filaments, preventing monomer exchange (end-blocking or capping). It can promote the assembly of monomers into filaments (nucleation) as well as sever filaments already formed. This Halocynthia roretzi (Sea squirt) protein is Gelsolin, cytoplasmic.